Reading from the N-terminus, the 168-residue chain is Protein YciE (168 aa).

This is Protein YciE (yciE) from Escherichia coli (strain K12).